The primary structure comprises 77 residues: Small ribosomal subunit protein uS17 (77 aa).

The protein belongs to the universal ribosomal protein uS17 family. As to quaternary structure, part of the 30S ribosomal subunit.

Functionally, one of the primary rRNA binding proteins, it binds specifically to the 5'-end of 16S ribosomal RNA. The sequence is that of Small ribosomal subunit protein uS17 from Rickettsia conorii (strain ATCC VR-613 / Malish 7).